We begin with the raw amino-acid sequence, 193 residues long: T-cell receptor-associated transmembrane adapter 1 (193 aa).

Residues 1–10 are Extracellular-facing; it reads MSGNAECHFS. The helical; Signal-anchor for type III membrane protein transmembrane segment at 11-31 threads the bilayer; it reads IWAILAFLGLALTISLIFNIF. The Cytoplasmic segment spans residues 32–193; it reads HCVEKQRQEK…LHSLDYDLAQ (162 aa). S46 carries the post-translational modification Phosphoserine. Y80 carries the phosphotyrosine modification. Residues 80 to 83 form an interaction with PIK3R1 region; that stretch reads YEQM. The tract at residues 116–166 is disordered; sequence NEGKRRKPRKQKSHLSDKDEEGQMHAKDISLSKTTLVDSYPPESEAIEENI. Residues 119 to 128 are compositionally biased toward basic residues; it reads KRRKPRKQKS. Over residues 129 to 145 the composition is skewed to basic and acidic residues; it reads HLSDKDEEGQMHAKDIS.

In terms of assembly, homodimer; disulfide-linked. Interacts with CD3Z. When phosphorylated, interacts with PIK3R1. Phosphorylated on tyrosines upon TCR activation.

The protein localises to the cell membrane. In terms of biological role, stabilizes the TCR (T-cell antigen receptor)/CD3 complex at the surface of T-cells. This Bos taurus (Bovine) protein is T-cell receptor-associated transmembrane adapter 1 (TRAT1).